A 367-amino-acid chain; its full sequence is Cyclic AMP-responsive element-binding protein 3-like protein 4 (367 aa).

The interval 1 to 52 (MELGCPELLEPPEDIFSTGSFLELGFNGPPSKVPGLQKSESDDFLNLFIDPN) is required for transcriptional activation. Residues 1–267 (MELGCPELLE…QTSSRAAQTS (267 aa)) are Cytoplasmic-facing. The disordered stretch occupies residues 58-81 (ETSPGSDSGVSEDPGSPAPQAPSS). The region spanning 189 to 252 (ILKKIRRKIR…ISLVAQVHQL (64 aa)) is the bZIP domain. The segment at 191-230 (KKIRRKIRNKQSAQDSRRRKKEYIDGLESRVAACSEQNQK) is basic motif. The tract at residues 231 to 252 (LQRKVQELERQNISLVAQVHQL) is leucine-zipper. The helical; Signal-anchor for type II membrane protein transmembrane segment at 268–288 (TCVLILLFSLALIILPSFSPF) threads the bilayer. Over 289-367 (QSQPEARSEG…IRGMVHADEM (79 aa)) the chain is Lumenal. Asparagine 338 carries an N-linked (GlcNAc...) asparagine glycan.

Belongs to the bZIP family. ATF subfamily. Binds DNA as a dimer. Forms a heterodimer with CREM isoform Delta. Controlled by regulated intramembrane proteolysis (RIP). Following ER stress a fragment containing the cytoplasmic transcription factor domain is released by proteolysis. The cleavage seems to be performed sequentially by site-1 and site-2 proteases (PS1 and PS2). PS1 cleavage may be suppressed by a determinant in the C-terminal region.

The protein localises to the endoplasmic reticulum membrane. It localises to the nucleus. In terms of biological role, transcriptional activator that may play a role in the unfolded protein response. Binds to the UPR element (UPRE) but not to CRE element. Preferentially binds DNA with to the consensus sequence 5'-T[GT]ACGT[GA][GT]-3' and has transcriptional activation activity from UPRE. Binds to NF-kappa-B site and has transcriptional activation activity from NF-kappa-B-containing regulatory elements. Increases the binding of CREM isoform Delta with CRE. The CREM isoform Delta-CREB3L4 heterodimer functions through CRE but not through UPRE and may recruit HIRA to CRE to regulate histone exchange. In Rattus norvegicus (Rat), this protein is Cyclic AMP-responsive element-binding protein 3-like protein 4 (Creb3l4).